The following is a 121-amino-acid chain: Basic phospholipase A2 homolog piratoxin-1 (121 aa).

7 cysteine pairs are disulfide-bonded: C26-C115, C28-C44, C43-C95, C49-C121, C50-C88, C57-C81, and C75-C86. Residues 105-117 form an important for membrane-damaging activities in eukaryotes and bacteria; heparin-binding region; sequence KLYRYHLKPFCKK.

Belongs to the phospholipase A2 family. Group II subfamily. K49 sub-subfamily. In terms of assembly, homodimer; non-covalently linked. Expressed by the venom gland.

Its subcellular location is the secreted. With respect to regulation, rosmarinic acid inhibits the myotoxic activity. Bromophenacyl bromide (BPB) inhibits the myotoxic activity through a covalent binding. Caffeic acid and aristolochic acid, two plant compounds used in folk medicine used to treat envenomation, inhibit the myotoxic activity. Its function is as follows. Snake venom phospholipase A2 (PLA2) homolog that lacks enzymatic activity. Is myotoxic and displays edema-inducing activities. Induces neuromuscular blockage. A model of myotoxic mechanism has been proposed: an apo Lys49-PLA2 is activated by the entrance of a hydrophobic molecule (e.g. fatty acid) at the hydrophobic channel of the protein leading to a reorientation of a monomer. This reorientation causes a transition between 'inactive' to 'active' states, causing alignment of C-terminal and membrane-docking sites (MDoS) side-by-side and putting the membrane-disruption sites (MDiS) in the same plane, exposed to solvent and in a symmetric position for both monomers. The MDoS region stabilizes the toxin on membrane by the interaction of charged residues with phospholipid head groups. Subsequently, the MDiS region destabilizes the membrane with penetration of hydrophobic residues. This insertion causes a disorganization of the membrane, allowing an uncontrolled influx of ions (i.e. calcium and sodium), and eventually triggering irreversible intracellular alterations and cell death. The chain is Basic phospholipase A2 homolog piratoxin-1 from Bothrops pirajai (Piraja's lancehead).